The chain runs to 180 residues: NAD(P)H-quinone oxidoreductase subunit I, chloroplastic (180 aa).

4Fe-4S ferredoxin-type domains are found at residues 55–84 (GRIH…VDWR) and 95–124 (LNYS…MTEE). The [4Fe-4S] cluster site is built by Cys-64, Cys-67, Cys-70, Cys-74, Cys-104, Cys-107, Cys-110, and Cys-114.

This sequence belongs to the complex I 23 kDa subunit family. In terms of assembly, NDH is composed of at least 16 different subunits, 5 of which are encoded in the nucleus. Requires [4Fe-4S] cluster as cofactor.

Its subcellular location is the plastid. It is found in the chloroplast thylakoid membrane. It carries out the reaction a plastoquinone + NADH + (n+1) H(+)(in) = a plastoquinol + NAD(+) + n H(+)(out). The enzyme catalyses a plastoquinone + NADPH + (n+1) H(+)(in) = a plastoquinol + NADP(+) + n H(+)(out). Functionally, NDH shuttles electrons from NAD(P)H:plastoquinone, via FMN and iron-sulfur (Fe-S) centers, to quinones in the photosynthetic chain and possibly in a chloroplast respiratory chain. The immediate electron acceptor for the enzyme in this species is believed to be plastoquinone. Couples the redox reaction to proton translocation, and thus conserves the redox energy in a proton gradient. This is NAD(P)H-quinone oxidoreductase subunit I, chloroplastic from Agrostis stolonifera (Creeping bentgrass).